Here is a 260-residue protein sequence, read N- to C-terminus: UPF0246 protein BPSL1241 (260 aa).

It belongs to the UPF0246 family.

The chain is UPF0246 protein BPSL1241 from Burkholderia pseudomallei (strain K96243).